A 374-amino-acid polypeptide reads, in one-letter code: Translocating chain-associated membrane protein 1 (374 aa).

Topologically, residues 1-29 (MAIRKKSTKSPPVLSHEFVLQNHADIVSC) are cytoplasmic. Residues 30-50 (VAMVFLLGLMFEITAKASIIF) form a helical membrane-spanning segment. Residues 51–76 (VTLQYNVTLPATEEQATESVSLYYYG) lie on the Lumenal side of the membrane. N-linked (GlcNAc...) asparagine glycosylation is present at Asn56. The chain crosses the membrane as a helical span at residues 77 to 97 (IKDLATVFFYMLVAIIIHAVI). Residues 98-121 (QEYMLDKINRRMHFSKTKHSKFNE) are Cytoplasmic-facing. Residues 117-326 (SKFNESGQLS…NFQLRRWREH (210 aa)) form the TLC domain. A helical transmembrane segment spans residues 122-142 (SGQLSAFYLFACVWGTFILIS). The Lumenal portion of the chain corresponds to 143 to 159 (ENYISDPTILWRAYPHN). A helical transmembrane segment spans residues 160 to 180 (LMTFQMKFFYISQLAYWLHAF). The Cytoplasmic portion of the chain corresponds to 181–192 (PELYFQKTKKED). A helical transmembrane segment spans residues 193–213 (IPRQLVYIGLYLFHIAGAYLL). Residues 214-217 (NLNH) are Lumenal-facing. Residues 218–238 (LGLVLLVLHYFVEFLFHISRL) form a helical membrane-spanning segment. At 239 to 251 (FYFSNEKYQKGFS) the chain is on the cytoplasmic side. Residues 252 to 272 (LWAVLFVLGRLLTLILSVLTV) form a helical membrane-spanning segment. The Lumenal segment spans residues 273–297 (GFGLARAENQKLDFSTGNFNVLAVR). A helical membrane pass occupies residues 298 to 318 (IAVLASICVTQAFMMWKFINF). The Cytoplasmic segment spans residues 319–374 (QLRRWREHSAFQAPAVKKKPTVTKGRSSKKGTENGVNGTLTSNVADSPRNKKEKSS). Over residues 334–347 (VKKKPTVTKGRSSK) the composition is skewed to basic residues. Residues 334 to 374 (VKKKPTVTKGRSSKKGTENGVNGTLTSNVADSPRNKKEKSS) are disordered. The segment covering 352 to 363 (NGVNGTLTSNVA) has biased composition (polar residues). At Ser365 the chain carries Phosphoserine.

The protein belongs to the TRAM family. Interacts with SEC61B. May interact with Derlin-1/DERL1. As to quaternary structure, (Microbial infection) Interacts with human cytomegalovirus/HHV-5 proteins US2 and US11. Post-translationally, N-glycosylated.

The protein resides in the endoplasmic reticulum membrane. Functionally, involved in the translocation of nascent protein chains into or through the endoplasmic reticulum (ER) membrane by facilitating the proper chain positioning at the SEC61 channel. Regulates the exposure of nascent secretory protein chain to the cytosol during translocation into the ER. May affect the phospholipid bilayer in the vicinity of the lateral gate of the SEC61 channel, thereby facilitating ER protein transport. Intimately associates with transmembrane (TM) domain of nascent membrane proteins during the entire integration process into the ER membrane. Associates with the second TM domain of G-protein-coupled receptor opsin/OPSD nascent chain in the ER membrane, which may facilitate its integration into the membrane. Under conditions of ER stress, participates in the disposal of misfolded ER membrane proteins during the unfolded protein response (UPR), an integrated stress response (ISR) pathway, by selectively retrotranslocating misfolded ER-membrane proteins from the ER into the cytosol where they are ubiquitinated and degraded by the proteasome. (Microbial infection) In case of cytomegalovirus infection, participates in US2- and US11-mediated ER-to-cytosol retrotranslocation and subsequent degradation of major histocompatibility complex (MHC) class I heavy chains, thereby decreasing the immune detection by cytotoxic T-cells. In Homo sapiens (Human), this protein is Translocating chain-associated membrane protein 1.